The sequence spans 705 residues: uncharacterized protein (705 aa).

This is an uncharacterized protein from Acanthamoeba polyphaga (Amoeba).